Consider the following 505-residue polypeptide: Glucose-6-phosphate 1-dehydrogenase (505 aa).

Ser2 is subject to N-acetylserine. Residues 18 to 25 (GASGDLAK) and Arg52 each bind NADP(+). Phosphoserine is present on Ser142. Tyr145 carries the post-translational modification Phosphotyrosine. Lys157 serves as a coordination point for NADP(+). Residues Lys157, 187-191 (HYLGK), Glu225, and Asp244 contribute to the D-glucose 6-phosphate site. The active-site Proton acceptor is His249. Residue Arg340 coordinates NADP(+). Lys343 lines the D-glucose 6-phosphate pocket. Positions 349, 353, and 375 each coordinate NADP(+). Residue Gln377 coordinates D-glucose 6-phosphate. NADP(+)-binding positions include 383 to 385 (YLK) and Arg470.

Belongs to the glucose-6-phosphate dehydrogenase family.

The catalysed reaction is D-glucose 6-phosphate + NADP(+) = 6-phospho-D-glucono-1,5-lactone + NADPH + H(+). The protein operates within carbohydrate degradation; pentose phosphate pathway; D-ribulose 5-phosphate from D-glucose 6-phosphate (oxidative stage): step 1/3. Its function is as follows. Catalyzes the rate-limiting step of the oxidative pentose-phosphate pathway, which represents a route for the dissimilation of carbohydrates besides glycolysis. The main function of this enzyme is to provide reducing power (NADPH) and pentose phosphates for fatty acid and nucleic acid synthesis. This is Glucose-6-phosphate 1-dehydrogenase (ZWF1) from Saccharomyces cerevisiae (strain ATCC 204508 / S288c) (Baker's yeast).